Consider the following 121-residue polypeptide: uncharacterized protein (121 aa).

2 helical membrane-spanning segments follow: residues 16–36 (GFMVFYISLFLILWLAAGFAV) and 74–94 (LYIAAVTVSGFISVYYEMKTI).

It is found in the cell membrane. This is an uncharacterized protein from Bacillus subtilis (strain 168).